Reading from the N-terminus, the 299-residue chain is Transcription factor MYB17 (299 aa).

HTH myb-type domains follow at residues 9–61 and 62–116; these read KIGL…TNYL and RPDI…KKRL. DNA-binding regions (H-T-H motif) lie at residues 37-61 and 89-112; these read WRTL…TNYL and WAAI…NTHL.

In terms of assembly, interacts with LFY. As to expression, expressed in the shoot apex, young flower buds, developing carpels and siliques. Expressed in floral meristem, initiating floral primordia and developing flowers.

It is found in the nucleus. In terms of biological role, transcription factor that may play a role in flower development by repressing ANT. Regulates the transition of meristem identity from vegetative growth to flowering. Acts downstream of LFY and upstream of AP1. Directly activates AP1 to promote floral fate. Together with LFY and AP1 may constitute a regulatory network that contributes to an abrupt and robust meristem identity transition. This is Transcription factor MYB17 from Arabidopsis thaliana (Mouse-ear cress).